A 148-amino-acid polypeptide reads, in one-letter code: Large ribosomal subunit protein uL16 (148 aa).

Belongs to the universal ribosomal protein uL16 family. In terms of assembly, part of the 50S ribosomal subunit.

Binds 23S rRNA and is also seen to make contacts with the A and possibly P site tRNAs. The chain is Large ribosomal subunit protein uL16 from Gloeobacter violaceus (strain ATCC 29082 / PCC 7421).